We begin with the raw amino-acid sequence, 322 residues long: Atrochrysone carboxyl ACP thioesterase nsrC (322 aa).

Zn(2+) contacts are provided by histidine 105, histidine 107, aspartate 109, and histidine 110. Catalysis depends on aspartate 109, which acts as the Proton donor/acceptor.

It belongs to the metallo-beta-lactamase superfamily. Requires Zn(2+) as cofactor.

The enzyme catalyses atrochrysone carboxyl-[ACP] + H2O = atrochrysone carboxylate + holo-[ACP] + H(+). The protein operates within secondary metabolite biosynthesis. Its function is as follows. Atrochrysone carboxyl ACP thioesterase; part of the gene cluster that mediates the biosynthesis of the tetrahydroxanthone dimer neosartorin, which exhibits antibacterial activity. The two different monomeric units appear to be synthesized by the same set of enzymes, among which the Baeyer-Villiger monooxygenase nsrF is the key enzyme for the divergence of the biosynthetic routes. The pathway begins with the synthesis of atrochrysone thioester by the polyketide synthase nsrB. The atrochrysone carboxyl ACP thioesterase nsrC then breaks the thioester bond and releases the atrochrysone carboxylic acid from AacuL. Atrochrysone carboxylic acid is decarboxylated by the decarboxylase nsrE, and oxidized by the anthrone oxygenase nsrD to yield emodin. Emodin is then reduced to emodin hydroquinone by the oxidoreductase nsrR. A-ring reduction by the short chain dehydrogenase nsrJ, dehydration by the scytalone dehydratase-like protein nsrI and probable spontaneous re-oxidation, results in overall deoxygenation to chrysophanol. The Baeyer-Villiger monooxygenase nsrF accepts chrysophanol as a substrate to insert one oxygen atom at two different positions to yield the precursors of both monomric units. NsrF is promiscuous/flexible in interacting with the 2 (non methylated and methylated) aromatic rings of chrysophanol, thus diverging the biosynthetic pathway at this point. After the hydrolysis of the lactones, methylesterification by the methyltransferase nsrG yields respectively moniliphenone and 2,2',6'-trihydroxy-4-methyl-6-methoxya-cyldiphenylmethanone. The next steps are the hydroxylation by the FAD-dependent monooxygenase nsrK, followed by isomerization by the monooxygenase nsrQ. The short chain dehydrogenase/reductase nsrO then catalyzes the C-5 ketoreduction to give the xanthone skeleton of blennolide C and 5-acetylblennolide A. The acetyltransferase nsrL has a strict substrate specificity and uses only blennolide A but not blennolide C to yield 5-acetylblennolide A as the single-acetylated product. In the final step of the biosynthesis, the heterodimerization of the 2 xanthones, blennolide C and 5-acetylblennolide A, is catalyzed by the cytochrome P450 monooxygenase nsrP. NsrP can utilize at least three different xanthones as its substrates to perform the dimerization reaction. This is Atrochrysone carboxyl ACP thioesterase nsrC from Aspergillus novofumigatus (strain IBT 16806).